Consider the following 332-residue polypeptide: Mediator of RNA polymerase II transcription subunit 3 (332 aa).

2 disordered regions span residues 125–206 (EPVR…PGAT) and 221–242 (SPLN…TTPS). Positions 132-143 (SPSYRRPSNRSS) are enriched in low complexity. Residues 144–153 (ADTPSSNAPT) show a composition bias toward polar residues. Composition is skewed to low complexity over residues 155–166 (SAAVVSGAALVA) and 184–200 (PSVS…SGPA).

It belongs to the Mediator complex subunit 3 family. Component of the Mediator complex.

Its subcellular location is the nucleus. Its function is as follows. Component of the Mediator complex, a coactivator involved in regulated gene transcription of nearly all RNA polymerase II-dependent genes. Mediator functions as a bridge to convey information from gene-specific regulatory proteins to the basal RNA polymerase II transcription machinery. Mediator is recruited to promoters by direct interactions with regulatory proteins and serves as a scaffold for the assembly of a functional preinitiation complex with RNA polymerase II and the general transcription factors. The sequence is that of Mediator of RNA polymerase II transcription subunit 3 (PGD1) from Eremothecium gossypii (strain ATCC 10895 / CBS 109.51 / FGSC 9923 / NRRL Y-1056) (Yeast).